The following is a 366-amino-acid chain: Protein sigma-NS (366 aa).

Positions 1 to 11 (MASSLRAAISK) are important for ssRNA-binding and formation of complexes.

Belongs to the orthoreovirus sigma-NS protein family. Homooligomer; in presence of RNA. Interacts with protein mu-NS; this interaction allows the localization of sigma-NS to the viral factories. Interacts with host G3BP1 (via C-terminus); this interaction induces the relocalization of G3BP1 and other SG proteins to the viral factories periphery.

It localises to the host cytoplasm. Protein that binds to ssRNA and participates with protein mu-NS in forming the matrix of viral factories, which are large inclusions in the host cytoplasm where replication intermediates are assembled and viral RNA replication takes place. Plays a role in the inhibition of the integrated stress response (ISR) to escape from host cell translational shutoff. Participates in the disruption of stress granules (SG) through its association with host G3BP1 and mu-NS. The protein is Protein sigma-NS (S3) of Mammalia (T1L).